The sequence spans 559 residues: Nuclear envelope integral membrane protein (559 aa).

The N-terminal stretch at 1–15 (MRLLTLALLVAGSLA) is a signal peptide. N-linked (GlcNAc...) asparagine glycans are attached at residues Asn67, Asn81, and Asn114. The next 5 membrane-spanning stretches (helical) occupy residues 164 to 184 (YTSGCSFGLLASLLLVAFIVW), 192 to 212 (IGVPILIGGWSVSLYMLHFAW), 218 to 238 (IMIEYQKYVIGYFATVLLISM), 267 to 287 (LIYFSVQMVEVSTGTIGALII), and 290 to 310 (ICRGFLFAGIRWYFVGLKAVW). N-linked (GlcNAc...) asparagine glycans are attached at residues Asn408 and Asn465. 2 disordered regions span residues 475–494 (RRDSTPRHGNFQSEHRPRMP) and 510–559 (KNGR…DADE). Over residues 517 to 526 (PSSSTASGMT) the composition is skewed to polar residues. The span at 530–539 (YMRKARRIDA) shows a compositional bias: basic and acidic residues.

This sequence belongs to the NEMP family.

It localises to the nucleus inner membrane. Contributes to nuclear envelope stiffness in germ cells. Required for fertility. The chain is Nuclear envelope integral membrane protein from Caenorhabditis elegans.